We begin with the raw amino-acid sequence, 1343 residues long: MVYSYSEKKRIRKDFGKRPQVLDIPYLLSIQLDSFKKFTDQDPTGERGLEAAFRSVFPIKSFSGNSELQYVSYKLGEPVFDVKECQIRGVTYSAPLRVKLRMVLYDREAAAGTVKDIKEQEVYMGDIPLMTDNGTFVINGTERVIVSQLHRSPGVFFDHDRGKTHSSGKVLYNARIIPYRGSWLDFEFDPKDALFVRIDRRRKLPATIILRALEYSTQEILDLFFERVEFKIKKDTLVMALVPERLRGETASYDIKDAEGSVLVEAGRRITARHIRQLEKTNTTELEVPVEYIVGKYAAQDYIDPDTGEVLVSANSEISLEDLAKLSLAGIKDISTLYINELDHGAYISDTLRIDSTTNRLEALVEIYRMMRPGEPPTKDAAEALFQNLFFSEERYDLSKVGRMKFNRRLSIPDDEGSGVLSKEDIVAVMKNIIHIRNGFDEVDDIDHLGNRRIRSVGEMAENQFRVGLVRVERAVRERLSLGDLNELMPQDLINAKPISAAVKEFFGSSQLSQFMDQNNPLSEVTHKRRISALGPGGLTRERAGFEVRDVHPTHYGRLCPIETPEGPNIGLINSLASFARTNSYGFLETPYRKVIDGVITDEVEYLSAIEEGRYVIAQANIEVDANGRMVEEQIACRHKGESTFMRASDIQYMDVSPQQIISVAASLIPFLEHDDANRALMGANMQRQAVPTLRSEKPLVGTGIERTLAVDSGVVVVAKRGGYIDYVDASRIVVKVNEDELRPGEAGIDIYNLTKYTRSNQNTCINQRPCCAVGEPVVRGDVLADGPSTDLGDLALGQNMRIAFMPWNGYNFEDSILISERVAQEDRFTTIHIQELSCIARDTKLGSEEITADIPNVGESALSKLDESGIVYIGAEVKGGDILVGKVTPKGETQLTPEEKLLRAIFGEKASDVKDSSLRVPNSVKGTIIDVQVFTRDGVEKDKRAVEIEEMHIAQARKDLSEEFKILEEGVLSRARNLLLGAGFTETQIAAMPRKDVLVQVIDDEAKQTELEQLAEQHEELKADFDKKFEIKRRKITQGDDLAPGVLKIVKVYLAVKRTIQPGDKMAGRHGNKGVISKICPIEDMPYDEQGNPVDIVLNPLGVPSRMNIGQVLEVHMGAAAKGIGNKITAMLEEQRELAEVRGYIKQVYELGDEVQQRVDIDSFTDDEVMRLAQNLKGGIPIATPAFDGAKEKEIKQMLELAGLPTSGQLKLYDGRTGNEFERQVTVGYMYMLKLNHLVDDKMHARSTGSYSLVTQQPLGGKAQFGGQRFGEMEVWALEAYGAAYTLQEMLTVKSDDVNGRTQMYKNIVDGNHQMQPGMPESFNVLLKEIRSLGINIELDQE.

The protein belongs to the RNA polymerase beta chain family. As to quaternary structure, the RNAP catalytic core consists of 2 alpha, 1 beta, 1 beta' and 1 omega subunit. When a sigma factor is associated with the core the holoenzyme is formed, which can initiate transcription.

The enzyme catalyses RNA(n) + a ribonucleoside 5'-triphosphate = RNA(n+1) + diphosphate. In terms of biological role, DNA-dependent RNA polymerase catalyzes the transcription of DNA into RNA using the four ribonucleoside triphosphates as substrates. The protein is DNA-directed RNA polymerase subunit beta of Shewanella sp. (strain W3-18-1).